A 245-amino-acid polypeptide reads, in one-letter code: 1-(5-phosphoribosyl)-5-[(5-phosphoribosylamino)methylideneamino] imidazole-4-carboxamide isomerase (245 aa).

Asp11 functions as the Proton acceptor in the catalytic mechanism. Asp132 serves as the catalytic Proton donor.

It belongs to the HisA/HisF family.

It localises to the cytoplasm. It carries out the reaction 1-(5-phospho-beta-D-ribosyl)-5-[(5-phospho-beta-D-ribosylamino)methylideneamino]imidazole-4-carboxamide = 5-[(5-phospho-1-deoxy-D-ribulos-1-ylimino)methylamino]-1-(5-phospho-beta-D-ribosyl)imidazole-4-carboxamide. The protein operates within amino-acid biosynthesis; L-histidine biosynthesis; L-histidine from 5-phospho-alpha-D-ribose 1-diphosphate: step 4/9. This chain is 1-(5-phosphoribosyl)-5-[(5-phosphoribosylamino)methylideneamino] imidazole-4-carboxamide isomerase, found in Bacillus velezensis (strain DSM 23117 / BGSC 10A6 / LMG 26770 / FZB42) (Bacillus amyloliquefaciens subsp. plantarum).